Reading from the N-terminus, the 577-residue chain is Hemagglutinin-neuraminidase (577 aa).

The Intravirion segment spans residues 1–26; sequence MDRAVSQVALENDEREAKNTWRLIFR. A helical transmembrane segment spans residues 27 to 47; sequence IAILFLTVVTLAISVASLLYS. Residues 48–577 are Virion surface-facing; sequence MGASTPSDLV…DDGVREARSG (530 aa). The important for interaction with fusion/F protein stretch occupies residues 124 to 152; sequence GAPIHDPDYIGGIGKELIVDDASDVTSFY. 4 N-linked (GlcNAc...) asparagine; by host glycosylation sites follow: N341, N433, N481, and N538.

The protein belongs to the paramyxoviruses hemagglutinin-neuraminidase family. In terms of assembly, homotetramer; composed of disulfide-linked homodimers. Interacts with F protein trimer. Interacts with host CG-1B; this interaction inhibits viral adsorption and replication rather than internalization.

The protein resides in the virion membrane. Its subcellular location is the host cell membrane. The catalysed reaction is Hydrolysis of alpha-(2-&gt;3)-, alpha-(2-&gt;6)-, alpha-(2-&gt;8)- glycosidic linkages of terminal sialic acid residues in oligosaccharides, glycoproteins, glycolipids, colominic acid and synthetic substrates.. Its function is as follows. Mediates the viral entry into the host cell together with fusion/F protein. Attaches the virus to sialic acid-containing cell receptors and thereby initiates infection. Binding of HN protein to the receptor induces a conformational change that allows the F protein to trigger virion/cell membranes fusion. In terms of biological role, neuraminidase activity ensures the efficient spread of the virus by dissociating the mature virions from the neuraminic acid containing glycoproteins. In Gallus gallus (Chicken), this protein is Hemagglutinin-neuraminidase (HN).